The following is a 420-amino-acid chain: L-rhamnose isomerase (420 aa).

His-264, Asp-296, and Asp-298 together coordinate Mn(2+).

It belongs to the rhamnose isomerase family. Mn(2+) is required as a cofactor.

It is found in the cytoplasm. The catalysed reaction is L-rhamnopyranose = L-rhamnulose. The protein operates within carbohydrate degradation; L-rhamnose degradation; glycerone phosphate from L-rhamnose: step 1/3. Catalyzes the interconversion of L-rhamnose and L-rhamnulose. This chain is L-rhamnose isomerase, found in Listeria monocytogenes serotype 4b (strain F2365).